The chain runs to 424 residues: uncharacterized protein (424 aa).

This sequence belongs to the serpin family.

This is an uncharacterized protein from Methanosarcina acetivorans (strain ATCC 35395 / DSM 2834 / JCM 12185 / C2A).